A 103-amino-acid chain; its full sequence is Large ribosomal subunit protein bL21 (103 aa).

Belongs to the bacterial ribosomal protein bL21 family. In terms of assembly, part of the 50S ribosomal subunit. Contacts protein L20.

Its function is as follows. This protein binds to 23S rRNA in the presence of protein L20. This Actinobacillus pleuropneumoniae serotype 7 (strain AP76) protein is Large ribosomal subunit protein bL21.